The sequence spans 416 residues: MLYLEDYLEMIEQLPMDLRDRFTEMREMDLQVQNAMDQLEQRVGEFFMNAKKNKPEWREEQMASIKKDYFKALEDADEKVQLANQIYDLVDRHLRKLDQELAKFKMELEADNAGITEILERRSLELDTPSQPVNNHHVHSHSSGEKRKHIPSSHHSTTDHVPEKKFKSEALLSTLTSDASKENTAGCRTNLSSSSTNNVYNVNSSQPLTSYNISSLSTGAAAGAITMAAAQAVQATAQMKEGRRTSSLKASYEAFKNTDLLGISLSRDSASYSSSALASTLTQTLTSSATTDSRSGRKSKSNNKSASQQSSSSSSSSSLSSCSSSSALAHELSHQQTAAIPESDTNSQVDWTYDPNEPRYCICNQVSYGEMVGCDNQDCPIEWFHYGCVGLSEAPKGKWYCPQCTAAMKRRGSRHK.

Disordered stretches follow at residues 126-165 (LDTPSQPVNNHHVHSHSSGEKRKHIPSSHHSTTDHVPEKK), 177-198 (SDASKENTAGCRTNLSSSSTNN), and 283-319 (QTLTSSATTDSRSGRKSKSNNKSASQQSSSSSSSSSL). Residues 136 to 152 (HHVHSHSSGEKRKHIPS) are compositionally biased toward basic residues. The span at 156 to 165 (STTDHVPEKK) shows a compositional bias: basic and acidic residues. Residues 177–187 (SDASKENTAGC) show a composition bias toward polar residues. Composition is skewed to low complexity over residues 189 to 198 (TNLSSSSTNN), 283 to 293 (QTLTSSATTDS), and 302 to 319 (NNKSASQQSSSSSSSSSL). The PHD-type zinc finger occupies 358-407 (PRYCICNQVSYGEMVGCDNQDCPIEWFHYGCVGLSEAPKGKWYCPQCTAA). Zn(2+) is bound by residues cysteine 361, cysteine 363, cysteine 374, cysteine 379, histidine 385, cysteine 388, cysteine 401, and cysteine 404.

The protein belongs to the ING family. In terms of assembly, interacts with H3K4me3 and to a lesser extent with H3K4me2. Component of the NuA4 histone acetyltransferase complex.

The protein resides in the nucleus. Functionally, component of the NuA4 histone acetyltransferase (HAT) complex which is involved in transcriptional activation of select genes principally by acetylation of nucleosomal histone H4 and H2A. This modification may both alter nucleosome - DNA interactions and promote interaction of the modified histones with other proteins which positively regulate transcription. NuA4 may also play a direct role in DNA repair when directly recruited to sites of DNA damage. In Xenopus laevis (African clawed frog), this protein is Inhibitor of growth protein 3 (ing3).